The following is a 282-amino-acid chain: Proteasome subunit beta (282 aa).

Positions 1 to 54 (MGSHRDLPAGMVNHIFTNSGISSFTEFVGSYAPDLLPGRNETLAAPVGDRIPHA) are cleaved as a propeptide — removed in mature form; by autocatalysis. Thr-55 functions as the Nucleophile in the catalytic mechanism.

It belongs to the peptidase T1B family. The 20S proteasome core is composed of 14 alpha and 14 beta subunits that assemble into four stacked heptameric rings, resulting in a barrel-shaped structure. The two inner rings, each composed of seven catalytic beta subunits, are sandwiched by two outer rings, each composed of seven alpha subunits. The catalytic chamber with the active sites is on the inside of the barrel. Has a gated structure, the ends of the cylinder being occluded by the N-termini of the alpha-subunits. Is capped by the proteasome-associated ATPase, ARC.

It localises to the cytoplasm. It catalyses the reaction Cleavage of peptide bonds with very broad specificity.. It functions in the pathway protein degradation; proteasomal Pup-dependent pathway. The formation of the proteasomal ATPase ARC-20S proteasome complex, likely via the docking of the C-termini of ARC into the intersubunit pockets in the alpha-rings, may trigger opening of the gate for substrate entry. Interconversion between the open-gate and close-gate conformations leads to a dynamic regulation of the 20S proteasome proteolysis activity. Functionally, component of the proteasome core, a large protease complex with broad specificity involved in protein degradation. The polypeptide is Proteasome subunit beta (Streptosporangium roseum (strain ATCC 12428 / DSM 43021 / JCM 3005 / KCTC 9067 / NCIMB 10171 / NRRL 2505 / NI 9100)).